Here is a 1782-residue protein sequence, read N- to C-terminus: MTSLKRSQTERPVTADRASVVSTDGAPKVHTDDFYMRRFRSQNGSLGSSVMAAVGPPRSEGPHHITSTPGVPKMGVRARIADWPPRKENVKESSRSSQEIETSSCLESLSSKGSPVSQGSSVSLNSNDSAMLKSIQNTLKNKTGPAESMDSRFLMPEAYPSSPRKALRRIRQRSNSDITISELDVDSFDECISPTYKSGPSLHREYGSTSSIDKQGTSGDSFFDLLKGYKDDRSDRGPTPTKLSDFLITGGGKGSGFSLDVIDGPISQRENLRLFKEREKPLKRRSKSETGDSSIFRKLRNAKGEELGKSSDLEDNRSEDSVRPWTCPKCFAHYDVQSILFDLNEAIMNRHNVIKRRNTTTGASAAAVASLVSGPLSHSASFSSPMGSTEDLNSKGSLGMDQGDDKSNELVMSCPYFRNEIGGEGERKISLSKSNSGSFSGCESTSFESALSSHCTNAGVAVLEVPKESLMLHLDRVKRYTVEHVDLGAYYYRKFFYQKEHWNYFGADENLGPVAVSIRREKPEDMKENGSPYNYRIIFRTSELMTLRGSVLEDAIPSTAKHSTARGLPLKEVLEHVIPELNVQCLRLAFNTPKVTEQLMKLDEQGLNYQQKVGIMYCKAGQSTEEEMYNNESAGPAFEEFLQLLGERVRLKGFEKYRAQLDTKTDSTGTHSLYTTYKDYEIMFHVSTMLPYTPNNKQQLLRKRHIGNDIVTIVFQEPGAQPFSPKNIRSHFQHVFVIVRAHNPCTESVCYSVAVTRSRDVPSFGPPIPKGVTFPKSNVFRDFLLAKVINAENAAHKSEKFRAMATRTRQEYLKDLAEKNVTNTPIDPSGKFPFISLASKKKEKSKPYPGAELSSMGAIVWAVRAKDYNKAMEFDCLLGISSEFIVLIEQETKSVAFNCSCRDVIGWTSSDTSLKIFYERGECVSVESFISGEDIKEIVRRLQFVSKGCESVEMTLRRNGLGQLGFHVNYEGIVADVEPYGYAWQAGLRQGSRLVEICKVAVATLSHEQMIDLLRTSVTVKVVIIPPHDDCTPRRSCSETYRMPVMEYQMNEGISYEFKFPFRNNNKWQRNASKGAHSPQVPSQLQSPMTSRLNAGKGDGKMPPPERAANIPRSISSDGRPLERRLSPGSDIYVTVSSMALARSQCRNSPSNLSSSSETGSGGGTYRQKSMPEGFGVSRRSPASIDRQNTQSDISGSGKSTPSWQRSEDSLADQMEPTCHLPAVSKVLPAFRESPSGRLMRQDPVVHLSPNKQGHSDSHYSSHSSSNTLSSNASSAHSDEKWYDGDRTESDLNSYNYLQGTSADSGIDTASYGPSHGSTASLGASTSSPRSGPGKEKVAPLWHSSSEVLSLADRTLETEGHGMDRKAESSLSLDIHSKSQGGSSPLSRENSTFSINDAASHTSTMSSRHSASPVVFSSARSSPKEELHPTASSQLAPSFSSSSSSSSGPRTFYPRQGATSKYLIGWKKPEGTINSVGFMDTRKRHQSDGNEIAHTRLRASTRDLQASPKPTSKSTIEEDLKKLIDLESPTPESQKNFKFHALSSPQSPFPTTPTSRRALHRTLSDESIYSSQREHFFTSRASLLDQALPNDVLFSSTYPSLPKSLPLRRPSYTLGMKSLHGEFSASDSSLTDIQETRRQPIPDPGLMPLPDAASDLDWSNLVDAAKAYEVQRASFFAASDENHRPLSAASNSDQLEEQALVQMKSYSSKDPSPTLASKVDQLEGMLKMLREDLKKEKEDKAQLQAEVEHLREDNLRLQEESQNASDKLKKFTEWVFNTIDMS.

Disordered regions lie at residues 1-28, 47-125, and 140-171; these read MTSL…GAPK, GSSV…VSLN, and KNKT…RRIR. Basic and acidic residues predominate over residues 84–94; it reads PPRKENVKESS. A compositionally biased stretch (low complexity) spans 95–125; sequence RSSQEIETSSCLESLSSKGSPVSQGSSVSLN. 6 positions are modified to phosphoserine: S162, S187, S193, S208, S255, and S288. The segment at 277 to 297 is disordered; sequence EREKPLKRRSKSETGDSSIFR. A Rap-GAP domain is found at 599 to 816; sequence LMKLDEQGLN…RTRQEYLKDL (218 aa). A PDZ domain is found at 953–1031; the sequence is EMTLRRNGLG…VVIIPPHDDC (79 aa). Disordered regions lie at residues 1069-1128 and 1144-1213; these read QRNA…RLSP and SQCR…SLAD. Phosphoserine is present on residues S1078, S1087, S1116, S1127, S1149, S1170, and S1181. The segment covering 1080-1093 has biased composition (polar residues); sequence QVPSQLQSPMTSRL. A compositionally biased stretch (low complexity) spans 1149-1159; sequence SPSNLSSSSET. Residues 1186–1205 show a composition bias toward polar residues; that stretch reads DRQNTQSDISGSGKSTPSWQ. Residues S1234 and S1249 each carry the phosphoserine modification. Residues 1247–1285 form a disordered region; it reads HLSPNKQGHSDSHYSSHSSSNTLSSNASSAHSDEKWYDG. The segment covering 1261 to 1276 has biased composition (low complexity); sequence SSHSSSNTLSSNASSA. S1305 is modified (phosphoserine; by PLK2). The interval 1307–1342 is disordered; sequence IDTASYGPSHGSTASLGASTSSPRSGPGKEKVAPLW. Residue T1309 is modified to Phosphothreonine; by PLK2. Residues 1315-1328 show a composition bias toward low complexity; it reads SHGSTASLGASTSS. A Phosphoserine; by CDK5 modification is found at S1328. S1345 is subject to Phosphoserine. The span at 1358–1368 shows a compositional bias: basic and acidic residues; sequence TEGHGMDRKAE. Residues 1358 to 1454 form a disordered region; that stretch reads TEGHGMDRKA…SSSGPRTFYP (97 aa). 5 positions are modified to phosphoserine: S1369, S1370, S1391, S1410, and S1412. Residues 1378 to 1410 show a composition bias toward polar residues; that stretch reads KSQGGSSPLSRENSTFSINDAASHTSTMSSRHS. Positions 1432 to 1447 are enriched in low complexity; the sequence is SSQLAPSFSSSSSSSS. Phosphoserine occurs at positions 1507 and 1528. T1530 bears the Phosphothreonine mark. Residues S1533, S1544, S1547, S1564, and S1567 each carry the phosphoserine modification. R1580 carries the asymmetric dimethylarginine modification. S1582, S1624, S1626, S1629, S1687, S1690, S1707, S1708, and S1712 each carry phosphoserine. Residues 1625–1647 form a disordered region; that stretch reads ASDSSLTDIQETRRQPIPDPGLM. A coiled-coil region spans residues 1713-1773; sequence PTLASKVDQL…ASDKLKKFTE (61 aa).

In terms of assembly, interacts with DLG4, PDLIM5, PDLIM7 and LZTS3. Interacts with the actin cytoskeleton. Interacts (via PDZ domain) with EPHA4 (via PDZ motif); controls neuronal morphology through regulation of the RAP1 (RAP1A or RAP1B) and RAP2 (RAP2A, RAP2B or RAP2C) GTPases. Post-translationally, ubiquitinated and degraded by the SCF(BTRC) following phosphorylation by PLK2. In terms of processing, phosphorylated at Ser-1328 by CDK5, creating a docking site for the POLO box domains of PLK2. Subsequently, PLK2 binds and phosphorylates SIPA1L1, leading to ubiquitination and degradation by the proteasome.

It is found in the cytoplasm. Its subcellular location is the cytoskeleton. It localises to the postsynaptic density. The protein localises to the synapse. The protein resides in the synaptosome. Its function is as follows. Stimulates the GTPase activity of RAP2A. Promotes reorganization of the actin cytoskeleton and recruits DLG4 to F-actin. Contributes to the regulation of dendritic spine morphogenesis. The sequence is that of Signal-induced proliferation-associated 1-like protein 1 (Sipa1l1) from Mus musculus (Mouse).